The primary structure comprises 190 residues: MDRKEQKSIIEGLLFVSGDEGIYPEQIAKVLEIEMNEAINILEEMQQECEGANRGLQIVQYAKVYRFATKKEHASYYQKLIDTPTAASLSQAALETLAIVAYRQPITRTEMEEIRGVKTDKALQTLVSHLLIKEMGRAEGPGRPILYGTTKEFLDTFGLKTLDDLPPLSEENEQMNEADLFFGSLQEISK.

The protein belongs to the ScpB family. Homodimer. Homodimerization may be required to stabilize the binding of ScpA to the Smc head domains. Component of a cohesin-like complex composed of ScpA, ScpB and the Smc homodimer, in which ScpA and ScpB bind to the head domain of Smc. The presence of the three proteins is required for the association of the complex with DNA.

Its subcellular location is the cytoplasm. Functionally, participates in chromosomal partition during cell division. May act via the formation of a condensin-like complex containing Smc and ScpA that pull DNA away from mid-cell into both cell halves. The protein is Segregation and condensation protein B of Bacillus cereus (strain B4264).